A 215-amino-acid chain; its full sequence is Ribose-5-phosphate isomerase A (215 aa).

Substrate contacts are provided by residues 26 to 29 (TGST), 79 to 82 (DGAD), and 92 to 95 (KGGG). The active-site Proton acceptor is the E101. K119 lines the substrate pocket.

The protein belongs to the ribose 5-phosphate isomerase family. Homodimer.

It carries out the reaction aldehydo-D-ribose 5-phosphate = D-ribulose 5-phosphate. It participates in carbohydrate degradation; pentose phosphate pathway; D-ribose 5-phosphate from D-ribulose 5-phosphate (non-oxidative stage): step 1/1. Its function is as follows. Catalyzes the reversible conversion of ribose-5-phosphate to ribulose 5-phosphate. The sequence is that of Ribose-5-phosphate isomerase A from Xanthomonas axonopodis pv. citri (strain 306).